A 182-amino-acid chain; its full sequence is Glutathione-regulated potassium-efflux system ancillary protein KefG (182 aa).

The protein belongs to the NAD(P)H dehydrogenase (quinone) family. KefG subfamily. In terms of assembly, interacts with KefB.

It localises to the cell inner membrane. It catalyses the reaction a quinone + NADH + H(+) = a quinol + NAD(+). It carries out the reaction a quinone + NADPH + H(+) = a quinol + NADP(+). Functionally, regulatory subunit of a potassium efflux system that confers protection against electrophiles. Required for full activity of KefB. This is Glutathione-regulated potassium-efflux system ancillary protein KefG from Yersinia pestis bv. Antiqua (strain Nepal516).